The following is a 274-amino-acid chain: Octanoyl-[GcvH]:protein N-octanoyltransferase (274 aa).

Residues 37-242 enclose the BPL/LPL catalytic domain; that stretch reads QGNDAVVRTW…AMKTLGATLS (206 aa). Residue Cys-141 is the Acyl-thioester intermediate of the active site.

Belongs to the octanoyltransferase LipL family.

The catalysed reaction is N(6)-octanoyl-L-lysyl-[glycine-cleavage complex H protein] + L-lysyl-[lipoyl-carrier protein] = N(6)-octanoyl-L-lysyl-[lipoyl-carrier protein] + L-lysyl-[glycine-cleavage complex H protein]. The protein operates within protein modification; protein lipoylation via endogenous pathway; protein N(6)-(lipoyl)lysine from octanoyl-[acyl-carrier-protein]. In terms of biological role, catalyzes the amidotransfer (transamidation) of the octanoyl moiety from octanoyl-GcvH to the lipoyl domain of the E2 subunit of lipoate-dependent enzymes. This is Octanoyl-[GcvH]:protein N-octanoyltransferase from Macrococcus caseolyticus (strain JCSC5402) (Macrococcoides caseolyticum).